A 502-amino-acid chain; its full sequence is MSQEKYIMAIDQGTTSSRAIIFNKKGEKVSSSQKEFTQIFPQAGWVEHNANEIWNSVQSVIAGAFIESGVKPNQIEAIGITNQRETTVVWDKNTGLPIYNAIVWQSRQTAPLAEQLKSQGYVEKFHEKTGLIIDAYFSATKVRWILDHVEGAQERAEKGELLFGTIDTWLVWKLTDGAAHVTDYSNAARTMLYNIKELKWDDEILEILNIPKAMLPEVRSNSEIYGKTAPFHFYGGEVPISGMAGDQQAALFGQLAFEPGMVKNTYGTGSFIIMNTGEEMQLSENNLLTTIGYGINGKVYYALEGSIFIAGSAIQWLRDGLRMVENSPESEKYALDSHNNDEVYVVPAFTGLGAPYWDQNARGSVFGLTRGTSKEDFIKATLQSIAYQVRDIIDTMQVDAKTAIQVLKVDGGAAMNNFLMQFQADILGIDIARAKNLETTALGAAFLAGLSVGYWKDLDELRTLNETGELFEPSMNESRKEQLYKGWKKAVKATQAFAEIDD.

Thr-14 contacts ADP. Residues Thr-14, Thr-15, and Ser-16 each contribute to the ATP site. Sn-glycerol 3-phosphate is bound at residue Thr-14. Arg-18 serves as a coordination point for ADP. The sn-glycerol 3-phosphate site is built by Arg-84, Glu-85, and Tyr-136. Arg-84, Glu-85, and Tyr-136 together coordinate glycerol. Residue His-232 is modified to Phosphohistidine; by HPr. Asp-246 is a binding site for sn-glycerol 3-phosphate. Residues Asp-246 and Gln-247 each contribute to the glycerol site. Residues Thr-268 and Gly-311 each contribute to the ADP site. ATP-binding residues include Thr-268, Gly-311, Gln-315, and Gly-412. Gly-412 and Asn-416 together coordinate ADP.

The protein belongs to the FGGY kinase family. In terms of assembly, homotetramer and homodimer (in equilibrium). Post-translationally, the phosphoenolpyruvate-dependent sugar phosphotransferase system (PTS), including enzyme I, and histidine-containing protein (HPr) are required for the phosphorylation, which leads to the activation of the enzyme.

It catalyses the reaction glycerol + ATP = sn-glycerol 3-phosphate + ADP + H(+). It functions in the pathway polyol metabolism; glycerol degradation via glycerol kinase pathway; sn-glycerol 3-phosphate from glycerol: step 1/1. Its activity is regulated as follows. Activated by phosphorylation and inhibited by fructose 1,6-bisphosphate (FBP). Its function is as follows. Key enzyme in the regulation of glycerol uptake and metabolism. Catalyzes the phosphorylation of glycerol to yield sn-glycerol 3-phosphate. The chain is Glycerol kinase from Streptococcus sanguinis (strain SK36).